The chain runs to 711 residues: Hydroperoxide isomerase ALOXE3 (711 aa).

In terms of domain architecture, PLAT spans 2–119; the sequence is AVYRLCVTTG…TVELRPGTAR (118 aa). The 593-residue stretch at 119–711 folds into the Lipoxygenase domain; that stretch reads RTICQDALPL…PPLIENSVSI (593 aa). Fe cation-binding residues include histidine 408, histidine 413, histidine 588, asparagine 592, and isoleucine 711.

The protein belongs to the lipoxygenase family. Requires Fe cation as cofactor.

It localises to the cytoplasm. The catalysed reaction is a hydroperoxyeicosatetraenoate = a hydroxy-epoxy-eicosatetraenoate. It catalyses the reaction a hydroperoxyeicosatetraenoate = an oxoeicosatetraenoate + H2O. It carries out the reaction (12R)-hydroperoxy-(5Z,8Z,10E,14Z)-eicosatetraenoate = (8R)-hydroxy-(11R,12R)-epoxy-(5Z,9E,14Z)-eicosatrienoate. The enzyme catalyses (12S)-hydroperoxy-(5Z,8Z,10E,14Z)-eicosatetraenoate = (8R)-hydroxy-(11S,12S)-epoxy-(5Z,9E,14Z)-eicosatrienoate. The catalysed reaction is (12S)-hydroperoxy-(5Z,8Z,10E,14Z)-eicosatetraenoate = (10R)-hydroxy-(11S,12S)-epoxy-(5Z,8Z,14Z)-eicosatrienoate. It catalyses the reaction (15S)-hydroperoxy-(5Z,8Z,11Z,13E)-eicosatetraenoate = (13R)-hydroxy-(14S,15S)-epoxy-(5Z,8Z,11Z)-eicosatrienoate. It carries out the reaction (5S)-hydroperoxy-(6E,8Z,11Z,14Z)-eicosatetraenoate = 7R-hydroxy-5S,6S-epoxy-(8Z,11Z,14Z)-eicosatrienoate. The enzyme catalyses (13S)-hydroperoxy-(9Z,11E)-octadecadienoate = 11-hydroxy-(12S,13S)-epoxy-(9Z)-octadecenoate. The catalysed reaction is N-[omega-(9R)-hydroperoxy-(10E,12Z)-octadecadienoyloxy]acyl-beta-D-glucosyl-(1&lt;-&gt;1)-octadecasphing-4E-enine = a N-[omega-(9R,10R)-epoxy-(13R)-hydroxy-(11E)-octadecenoyloxy]acyl-beta-D-glucosyl-(1&lt;-&gt;1)-sphing-4E-enine. It catalyses the reaction a N-[omega-(9R)-hydroperoxy-(10E,12Z)-octadecadienoyloxy]-acylsphin-4E-enine = a N-[omega-(9R,10R)-epoxy-(13R)-hydroxy-(11E)-octadecenoyloxy]-acylsphing-4E-enine. It carries out the reaction (12R)-hydroperoxy-(5Z,8Z,10E,14Z)-eicosatetraenoate = 12-oxo-(5Z,8Z,10E,14Z)-eicosatetraenoate + H2O. The enzyme catalyses (12S)-hydroperoxy-(5Z,8Z,10E,14Z)-eicosatetraenoate = 12-oxo-(5Z,8Z,10E,14Z)-eicosatetraenoate + H2O. The catalysed reaction is (15S)-hydroperoxy-(5Z,8Z,11Z,13E)-eicosatetraenoate = 15-oxo-(5Z,8Z,11Z,13E)-eicosatetraenoate + H2O. It catalyses the reaction (13S)-hydroperoxy-(9Z,11E)-octadecadienoate = 13-oxo-(9Z,11E)-octadecadienoate + H2O. It carries out the reaction (8S)-hydroperoxy-(5Z,9E,11Z,14Z)-eicosatetraenoate = (10R)-hydroxy-(8S,9S)-epoxy-(5Z,11Z,14Z)-eicosatrienoate. The enzyme catalyses (8R)-hydroperoxy-(5Z,9E,11Z,14Z)-eicosatetraenoate = 8-oxo-(5Z,9E,11Z,14Z)-eicosatetraenoate + H2O. The catalysed reaction is (8S)-hydroperoxy-(5Z,9E,11Z,14Z)-eicosatetraenoate = 8-oxo-(5Z,9E,11Z,14Z)-eicosatetraenoate + H2O. It functions in the pathway lipid metabolism; hydroperoxy eicosatetraenoic acid biosynthesis. Its pathway is lipid metabolism; sphingolipid metabolism. In terms of biological role, non-heme iron-containing lipoxygenase which is atypical in that it displays a prominent hydroperoxide isomerase activity and a reduced lipoxygenases activity. The hydroperoxide isomerase activity catalyzes the isomerization of hydroperoxides, derived from arachidonic and linoleic acid by ALOX12B, into hepoxilin-type epoxyalcohols and ketones. In presence of oxygen, oxygenates polyunsaturated fatty acids, including arachidonic acid, to produce fatty acid hydroperoxides. In the skin, acts downstream of ALOX12B on the linoleate moiety of esterified omega-hydroxyacyl-sphingosine (EOS) ceramides to produce an epoxy-ketone derivative, a crucial step in the conjugation of omega-hydroxyceramide to membrane proteins. Therefore plays a crucial role in the synthesis of corneocytes lipid envelope and the establishment of the skin barrier to water loss. In parallel, it may have a signaling function in barrier formation through the production of hepoxilins metabolites. Also plays a role in adipocyte differentiation through hepoxilin A3 and hepoxilin B3 production which in turn activate PPARG. Through the production of hepoxilins in the spinal cord, it may regulate inflammatory tactile allodynia. The sequence is that of Hydroperoxide isomerase ALOXE3 from Rattus norvegicus (Rat).